We begin with the raw amino-acid sequence, 174 residues long: tRNA (cytidine(56)-2'-O)-methyltransferase (174 aa).

S-adenosyl-L-methionine is bound by residues Leu-83, 108–112 (GAEKV), and 126–133 (VGNQPHSE).

This sequence belongs to the aTrm56 family. As to quaternary structure, homodimer.

The protein localises to the cytoplasm. The enzyme catalyses cytidine(56) in tRNA + S-adenosyl-L-methionine = 2'-O-methylcytidine(56) in tRNA + S-adenosyl-L-homocysteine + H(+). Functionally, specifically catalyzes the AdoMet-dependent 2'-O-ribose methylation of cytidine at position 56 in tRNAs. This chain is tRNA (cytidine(56)-2'-O)-methyltransferase, found in Methanothrix thermoacetophila (strain DSM 6194 / JCM 14653 / NBRC 101360 / PT) (Methanosaeta thermophila).